Consider the following 271-residue polypeptide: MKI67 FHA domain-interacting nucleolar phosphoprotein (271 aa).

The interval 1 to 20 (MAEYSGPAKPTLALNPREDS) is disordered. Residue A2 is modified to N-acetylalanine. A Glycyl lysine isopeptide (Lys-Gly) (interchain with G-Cter in SUMO2) cross-link involves residue K37. The region spanning 44 to 122 (GVVYLGHLPS…RLLSCKFMPR (79 aa)) is the RRM domain. Residue R113 is modified to Omega-N-methylarginine. Glycyl lysine isopeptide (Lys-Gly) (interchain with G-Cter in SUMO2) cross-links involve residues K178 and K191. T213 and T217 each carry phosphothreonine. R223 and R224 each carry omega-N-methylated arginine. S226 bears the Phosphoserine mark. The segment at 242–271 (PVSPVKEDTQKTPAPESSGKKRLRKRKSKQ) is disordered. K247 participates in a covalent cross-link: Glycyl lysine isopeptide (Lys-Gly) (interchain with G-Cter in SUMO1); alternate. A Glycyl lysine isopeptide (Lys-Gly) (interchain with G-Cter in SUMO2); alternate cross-link involves residue K247. Positions 261 to 271 (KKRLRKRKSKQ) are enriched in basic residues.

In terms of assembly, binds to the FHA domain of MKI67; this interaction is enhanced in mitosis. Phosphorylated.

Its subcellular location is the nucleus. It localises to the nucleolus. The protein localises to the chromosome. The protein is MKI67 FHA domain-interacting nucleolar phosphoprotein (Nifk) of Rattus norvegicus (Rat).